Here is a 314-residue protein sequence, read N- to C-terminus: Melanoma-associated antigen 2 (314 aa).

A compositionally biased stretch (basic and acidic residues) spans 1–20 (MPLEQRSQHCKPEEGLEARG). The disordered stretch occupies residues 1 to 69 (MPLEQRSQHC…SPPHSPQGAS (69 aa)). Positions 21–44 (EALGLVGAQAPATEEQQTASSSST) are enriched in low complexity. S64 carries the phosphoserine modification. Positions 109–308 (ISRKMVELVH…ISYPPLHERA (200 aa)) constitute an MAGE domain.

Interacts with TRIM28 and UBE2H. Interacts with HDAC3. Interacts with PML (isoform PML-1, isoform PML-2, isoform PML-3, isoform PML-4 and isoform PML-5). Expressed in many tumors of several types, such as melanoma, head and neck squamous cell carcinoma, lung carcinoma and breast carcinoma, but not in normal tissues except for testes.

It localises to the nucleus. The protein resides in the PML body. Functionally, reduces p53/TP53 transactivation function through recruitment of HDAC3 to p53/TP53 transcription sites. Also represses p73/TP73 activity. Proposed to enhance ubiquitin ligase activity of RING-type zinc finger-containing E3 ubiquitin-protein ligases. In vitro enhances ubiquitin ligase activity of TRIM28 and stimulates p53/TP53 ubiquitination by TRIM28 potentially in presence of Ubl-conjugating enzyme UBE2H. Proposed to act through recruitment and/or stabilization of the Ubl-conjugating enzyme (E2) at the E3:substrate complex. May play a role in embryonal development and tumor transformation or aspects of tumor progression. In vitro promotes cell viability in melanoma cell lines. Antigen recognized on a melanoma by autologous cytolytic T-lymphocytes. Negatively regulates acetylation and sumoylation of PML and represses PML-induced p53/TP53 acetylation and activation. The chain is Melanoma-associated antigen 2 (MAGEA2) from Homo sapiens (Human).